Consider the following 305-residue polypeptide: Methionyl-tRNA formyltransferase (305 aa).

111–114 (SLLP) lines the (6S)-5,6,7,8-tetrahydrofolate pocket.

This sequence belongs to the Fmt family.

It carries out the reaction L-methionyl-tRNA(fMet) + (6R)-10-formyltetrahydrofolate = N-formyl-L-methionyl-tRNA(fMet) + (6S)-5,6,7,8-tetrahydrofolate + H(+). In terms of biological role, attaches a formyl group to the free amino group of methionyl-tRNA(fMet). The formyl group appears to play a dual role in the initiator identity of N-formylmethionyl-tRNA by promoting its recognition by IF2 and preventing the misappropriation of this tRNA by the elongation apparatus. This is Methionyl-tRNA formyltransferase from Campylobacter jejuni subsp. jejuni serotype O:6 (strain 81116 / NCTC 11828).